Consider the following 256-residue polypeptide: Astacin-like metalloprotease toxin 2 (256 aa).

The first 24 residues, 1–24 (MIPDVGFLVLLTGALFICIKAAPA), serve as a signal peptide directing secretion. A propeptide spanning residues 25–52 (TTDVDPTFEGRIVMEGDILIREEQLTER) is cleaved from the precursor. The Peptidase M12A domain maps to 53 to 250 (NAIALENMRW…KKINTLYNCP (198 aa)). 2 disulfide bridges follow: Cys94–Cys249 and Cys117–Cys136. Residue His144 coordinates Zn(2+). The active site involves Glu145. Residues His148 and His154 each contribute to the Zn(2+) site.

As to quaternary structure, monomer. The cofactor is Zn(2+). As to expression, expressed by the venom gland.

It localises to the secreted. With respect to regulation, inhibited by 1,10-phenanthroline. Its function is as follows. Zinc metalloprotease. Provoques deadhesion of endothelial cells from cell cultures, and also degradation of fibronectin, fibrinogen and gelatin in vitro. Its role in the venom is not fully understood but it might act as a spreading factor that facilitates diffusion of other venom toxins. Alternatively, it might be involved in the proteolytic processing of other venom toxins or it might play a role in extra-oral digestion of prey. The protein is Astacin-like metalloprotease toxin 2 of Loxosceles intermedia (Brown spider).